A 1236-amino-acid chain; its full sequence is ATP-dependent helicase/nuclease subunit A (1236 aa).

Positions 2 to 457 constitute a UvrD-like helicase ATP-binding domain; the sequence is AHWTIEQEEA…VDLNKNFRSH (456 aa). ATP is bound at residue 23–30; sequence AAAGSGKT. A UvrD-like helicase C-terminal domain is found at 515–816; the sequence is NTAKRVEICI…RIMSIHKSKG (302 aa).

Belongs to the helicase family. AddA subfamily. As to quaternary structure, heterodimer of AddA and AddB/RexB. Mg(2+) is required as a cofactor.

The enzyme catalyses Couples ATP hydrolysis with the unwinding of duplex DNA by translocating in the 3'-5' direction.. It catalyses the reaction ATP + H2O = ADP + phosphate + H(+). In terms of biological role, the heterodimer acts as both an ATP-dependent DNA helicase and an ATP-dependent, dual-direction single-stranded exonuclease. Recognizes the chi site generating a DNA molecule suitable for the initiation of homologous recombination. The AddA nuclease domain is required for chi fragment generation; this subunit has the helicase and 3' -&gt; 5' nuclease activities. In Syntrophomonas wolfei subsp. wolfei (strain DSM 2245B / Goettingen), this protein is ATP-dependent helicase/nuclease subunit A.